The primary structure comprises 1440 residues: SVAMKHLTSFKRELGTLIDAVNKRGRKQNKRGGNEGSIMWLASLAVVIACAGAMKLSNFQGKLLMTVNNTDIADVIVIPNPSKGENRCWVRAIDVGYMCEDTITYECPKLTMGNDPEDVDCWCDNQEVYVQYGRCTRTRHSKRSRRSVSVQTHGESSLVNKKEAWLDSTKATRYLMKTENWIVRNPGYAFLAAILGWMLGSNNGQRRWYFTILLLLVAPAYSFNCLGMGNRDFIEGASGATWVDLVLEGDSCLTIMANDKPTLDVRMINIEAVQLAEVRSYCYHASVTDISTVARCPTTGEAHNEKRADSSYVCKQGFTDRGWGNGCGLFGKGSIDTCAKFSCTSKAIGRTIQPENIKYEVGIFVHGTTTSENHGNYSAQVGASQAAKFTVTPNAPSITLKLGDYGEVTLDCEPRSGLNTEAFYVMTVGSKSFLVHREWFHDLALPWTPPSSTAWRNRELLMEFEEAHATKQSVVALGSQEGGLHQALAGAIVVEYSSSVKLTSGHLKCRLKMDKLALKGTTYGMCTEKFSFAKNPADTGHGTVVIELSYSGSDGPCKIPIVSVASLNDMTPVGRLVTVNPFVATSSANSKVLVEMEPPFGDSYIVVGRGDKQINHHWHKAGSTLGKAFSTTLKGAQRLAALGDTAWDFGSIGGVFNSIGKAVHQVFGGAFRTLFGGMSWITQGLMGALLLWMGVNARDRSIALAFLATGGVLVFLATNVHADTGCAIDITRKEMRCGSGIFVHNDVEAWVDRYKYLPETPRSLAKIVHKAHKEGVCGVRSVTRLEHQMWEAVRDELNVLLKENAVDLSVVVNKPVGRYRSAPKRLSMTQEKFEMGWKAWGKSILFAPELANSTFVVDGPETKECPDEHRAWNSIEIEDFGFGITSTRVWLKIREESTDECDGAIIGTAVKGHVAVHSDLSYWIESRYNDTWKLERAVFGEVKSCTWPETHTLWGDGVEESELIIPHTIAGPKSKHNRREGYKTQNQGPWDENGIVLDFDYCPGTKVTITEDCGKRGPSVRTTTDSGKLITDWCCRSCSLPPLRFRTENGCWYGMEIRPVRHDETTLVRSQVDAFNGEMVDPFQLGLLVMFLATQEVLRKRWTARLTIPAVLGALLVLMLGGITYTDLARYVVLVAAAFAEANSGGDVLHLALIAVFKIQPAFLVMNMLSTRWTNQENVVLVLGAAFFHLASVDLQIGVHGILNAAAIAWMIVRAITFPTTSSVTMPVLALLTPGMRALYLDTYRIILLVIGICSLLQERKKTMAKKKGAVLLGLALTSTGWFSPTTIAAGLMVCNPNKKRGWPATEFLSAVGLMFAIVGGLAELDIESMSIPFMLAGLMAVSYVVSGKATDMWLERAADISWEMDAAITGSSRRLDVKLDDDGDFHLIDDPGVPWKVWVLRMSCIGLAALTPWAIVPAAFGYWLTLKTTKRGGVFWDTP.

Residues 32-53 (GGNEGSIMWLASLAVVIACAGA) constitute a propeptide, ER anchor for the capsid protein C, removed in mature form by serine protease NS3. A helical transmembrane segment spans residues 36 to 56 (GSIMWLASLAVVIACAGAMKL). Residues 57–180 (SNFQGKLLMT…ATRYLMKTEN (124 aa)) lie on the Extracellular side of the membrane. A glycan (N-linked (GlcNAc...) asparagine; by host) is linked at Asn68. The chain crosses the membrane as a helical span at residues 181 to 201 (WIVRNPGYAFLAAILGWMLGS). Residues 202-207 (NNGQRR) lie on the Cytoplasmic side of the membrane. Residues 208-222 (WYFTILLLLVAPAYS) traverse the membrane as a helical segment. Residues 223–674 (FNCLGMGNRD…QVFGGAFRTL (452 aa)) lie on the Extracellular side of the membrane. 6 cysteine pairs are disulfide-bonded: Cys225-Cys252, Cys282-Cys338, Cys282-Cys343, Cys296-Cys327, Cys314-Cys338, and Cys314-Cys343. The segment at 320–333 (DRGWGNGCGLFGKG) is fusion peptide. An N-linked (GlcNAc...) asparagine; by host glycan is attached at Asn376. Intrachain disulfides connect Cys412–Cys509 and Cys526–Cys557. The helical transmembrane segment at 675–695 (FGGMSWITQGLMGALLLWMGV) threads the bilayer. The Cytoplasmic portion of the chain corresponds to 696-701 (NARDRS). Residues 702-722 (IALAFLATGGVLVFLATNVHA) traverse the membrane as a helical segment. Residues 723-1147 (DTGCAIDITR…AFAEANSGGD (425 aa)) lie on the Extracellular side of the membrane. Disulfide bonds link Cys726–Cys737, Cys777–Cys865, Cys901–Cys945, Cys1002–Cys1051, Cys1013–Cys1034, and Cys1035–Cys1038. Residues Asn852 and Asn929 are each glycosylated (N-linked (GlcNAc...) asparagine; by host). The helical transmembrane segment at 1148 to 1168 (VLHLALIAVFKIQPAFLVMNM) threads the bilayer. Topologically, residues 1169–1178 (LSTRWTNQEN) are cytoplasmic. A helical transmembrane segment spans residues 1179–1199 (VVLVLGAAFFHLASVDLQIGV). Position 1200 (His1200) is a topological domain, lumenal. Residues 1201–1221 (GILNAAAIAWMIVRAITFPTT) form a helical membrane-spanning segment. Residues 1222–1237 (SSVTMPVLALLTPGMR) lie on the Cytoplasmic side of the membrane. A helical transmembrane segment spans residues 1238–1258 (ALYLDTYRIILLVIGICSLLQ). The Lumenal segment spans residues 1259–1269 (ERKKTMAKKKG). Residues 1270 to 1290 (AVLLGLALTSTGWFSPTTIAA) form a helical membrane-spanning segment. Over 1291–1302 (GLMVCNPNKKRG) the chain is Cytoplasmic. The chain crosses the membrane as a helical span at residues 1303–1323 (WPATEFLSAVGLMFAIVGGLA). Residues 1324–1326 (ELD) are Lumenal-facing. Residues 1327–1347 (IESMSIPFMLAGLMAVSYVVS) traverse the membrane as a helical segment. Over 1348 to 1404 (GKATDMWLERAADISWEMDAAITGSSRRLDVKLDDDGDFHLIDDPGVPWKVWVLRMS) the chain is Cytoplasmic. The interval 1355–1394 (LERAADISWEMDAAITGSSRRLDVKLDDDGDFHLIDDPGV) is interacts with and activates NS3 protease. Residues 1405–1425 (CIGLAALTPWAIVPAAFGYWL) constitute an intramembrane region (helical). Residues 1426–1440 (TLKTTKRGGVFWDTP) are Cytoplasmic-facing.

Homodimer. Interacts (via N-terminus) with host EXOC1 (via C-terminus); this interaction results in EXOC1 degradation through the proteasome degradation pathway. In terms of assembly, forms heterodimers with envelope protein E in the endoplasmic reticulum and Golgi. As to quaternary structure, homodimer; in the endoplasmic reticulum and Golgi. Interacts with protein prM. Interacts with non-structural protein 1. Homodimer; Homohexamer when secreted. Interacts with envelope protein E. NS1 interacts with NS4B. Interacts with host complement protein CFH; this interaction leads to the degradation of C3. In terms of assembly, interacts (via N-terminus) with serine protease NS3. As to quaternary structure, forms a heterodimer with serine protease NS3. May form homooligomers. Forms a heterodimer with NS2B. Interacts with non-structural protein 2A (via N-terminus). Interacts with NS4B. Interacts with unphosphorylated RNA-directed RNA polymerase NS5; this interaction stimulates RNA-directed RNA polymerase NS5 guanylyltransferase activity. Mn(2+) serves as cofactor. It depends on Mg(2+) as a cofactor. In terms of processing, specific enzymatic cleavages in vivo yield mature proteins. Cleavages in the lumen of endoplasmic reticulum are performed by host signal peptidase, whereas cleavages in the cytoplasmic side are performed by serine protease NS3. Signal cleavage at the 2K-4B site requires a prior NS3 protease-mediated cleavage at the 4A-2K site. Cleaved in post-Golgi vesicles by a host furin, releasing the mature small envelope protein M, and peptide pr. This cleavage is incomplete as up to 30% of viral particles still carry uncleaved prM. Post-translationally, N-glycosylated. In terms of processing, N-glycosylated. The excreted form is glycosylated and this is required for efficient secretion of the protein from infected cells. RNA-directed RNA polymerase NS5: Phosphorylated on serines residues. This phosphorylation may trigger NS5 nuclear localization.

It localises to the virion. The protein resides in the host nucleus. The protein localises to the host cytoplasm. Its subcellular location is the host perinuclear region. It is found in the secreted. It localises to the virion membrane. The protein resides in the host endoplasmic reticulum membrane. It carries out the reaction Selective hydrolysis of -Xaa-Xaa-|-Yaa- bonds in which each of the Xaa can be either Arg or Lys and Yaa can be either Ser or Ala.. The catalysed reaction is a ribonucleoside 5'-triphosphate + H2O = a ribonucleoside 5'-diphosphate + phosphate + H(+). The enzyme catalyses ATP + H2O = ADP + phosphate + H(+). Its function is as follows. Plays a role in virus budding by binding to the cell membrane and gathering the viral RNA into a nucleocapsid that forms the core of a mature virus particle. During virus entry, may induce genome penetration into the host cytoplasm after hemifusion induced by the surface proteins. Can migrate to the cell nucleus where it modulates host functions. Overcomes the anti-viral effects of host EXOC1 by sequestering and degrading the latter through the proteasome degradation pathway. Inhibits RNA silencing by interfering with host Dicer. Functionally, prevents premature fusion activity of envelope proteins in trans-Golgi by binding to envelope protein E at pH 6.0. After virion release in extracellular space, gets dissociated from E dimers. In terms of biological role, acts as a chaperone for envelope protein E during intracellular virion assembly by masking and inactivating envelope protein E fusion peptide. prM is the only viral peptide matured by host furin in the trans-Golgi network probably to avoid catastrophic activation of the viral fusion activity in acidic Golgi compartment prior to virion release. prM-E cleavage is inefficient, and many virions are only partially matured. These uncleaved prM would play a role in immune evasion. Its function is as follows. May play a role in virus budding. Exerts cytotoxic effects by activating a mitochondrial apoptotic pathway through M ectodomain. May display a viroporin activity. Binds to host cell surface receptor and mediates fusion between viral and cellular membranes. Envelope protein is synthesized in the endoplasmic reticulum in the form of heterodimer with protein prM. They play a role in virion budding in the ER, and the newly formed immature particle is covered with 60 spikes composed of heterodimer between precursor prM and envelope protein E. The virion is transported to the Golgi apparatus where the low pH causes dissociation of PrM-E heterodimers and formation of E homodimers. prM-E cleavage is inefficient, and many virions are only partially matured. These uncleaved prM would play a role in immune evasion. Functionally, involved in immune evasion, pathogenesis and viral replication. Once cleaved off the polyprotein, is targeted to three destinations: the viral replication cycle, the plasma membrane and the extracellular compartment. Essential for viral replication. Required for formation of the replication complex and recruitment of other non-structural proteins to the ER-derived membrane structures. Excreted as a hexameric lipoparticle that plays a role against host immune response. Antagonizing the complement function. Binds to the host macrophages and dendritic cells. Inhibits signal transduction originating from Toll-like receptor 3 (TLR3). In terms of biological role, component of the viral RNA replication complex that functions in virion assembly and antagonizes the host alpha/beta interferon antiviral response. Its function is as follows. Required cofactor for the serine protease function of NS3. May have membrane-destabilizing activity and form viroporins. Displays three enzymatic activities: serine protease, NTPase and RNA helicase. NS3 serine protease, in association with NS2B, performs its autocleavage and cleaves the polyprotein at dibasic sites in the cytoplasm: C-prM, NS2A-NS2B, NS2B-NS3, NS3-NS4A, NS4A-2K and NS4B-NS5. NS3 RNA helicase binds RNA and unwinds dsRNA in the 3' to 5' direction. Functionally, non-structural protein 4A: Regulates the ATPase activity of the NS3 helicase activity. NS4A allows NS3 helicase to conserve energy during unwinding. In terms of biological role, peptide 2k: Functions as a signal peptide for NS4B and is required for the interferon antagonism activity of the latter. Its function is as follows. Non-structural protein 4B: Induces the formation of ER-derived membrane vesicles where the viral replication takes place. Inhibits interferon (IFN)-induced host STAT1 phosphorylation and nuclear translocation, thereby preventing the establishment of cellular antiviral state by blocking the IFN-alpha/beta pathway. Inhibits STAT2 translocation in the nucleus after IFN-alpha treatment. RNA-directed RNA polymerase NS5: Replicates the viral (+) and (-) RNA genome. Performs the capping of genomes in the cytoplasm. NS5 methylates viral RNA cap at guanine N-7 and ribose 2'-O positions. Besides its role in RNA genome replication, also prevents the establishment of cellular antiviral state by blocking the interferon-alpha/beta (IFN-alpha/beta) signaling pathway. Inhibits host TYK2 and STAT2 phosphorylation, thereby preventing activation of JAK-STAT signaling pathway. The sequence is that of Genome polyprotein from Japanese encephalitis virus (strain Nakayama) (JEV).